A 514-amino-acid chain; its full sequence is Major capsid protein (514 aa).

The protein belongs to the T4 phage capsid protein family. In terms of assembly, homohexamer. Interacts with the portal protein. Interacts with the capsid vertex protein that forms pentamers. In terms of processing, a proteolytic cleavage by the prohead core protein protease gives rise to the mature major capsid protein during virus maturation.

The protein resides in the virion. In terms of biological role, major capsid protein that self-associates to form hexamers, building most of the capsid in association with pentons made of the capsid vertex protein and one dodecamer of the portal protein. This Vibrio parahaemolyticus (KVP40) protein is Major capsid protein.